The chain runs to 143 residues: Polyadenylate-binding protein-interacting protein 2 (143 aa).

The PAM2-like motif lies at 11–21 (TLNPNAPVFDP).

This chain is Polyadenylate-binding protein-interacting protein 2 (CID2), found in Arabidopsis thaliana (Mouse-ear cress).